The sequence spans 928 residues: Nitrogen network kinase 1 (928 aa).

Residues 1 to 12 are compositionally biased toward polar residues; sequence MFTSQRQLRQNG. 2 disordered regions span residues 1 to 43 and 81 to 118; these read MFTS…SYGR and HEHPSRSTLVQLQTRSQPDDVASSQVNPEGGTDDLELG. A compositionally biased stretch (low complexity) spans 13-29; the sequence is SPMSSSRSSQHSSGTAS. Polar residues-rich tracts occupy residues 30 to 40 and 86 to 107; these read PISDSPASNRS and RSTLVQLQTRSQPDDVASSQVN. Residues Ser178 and Ser179 each carry the phosphoserine modification. Positions 374–394 are disordered; the sequence is ANDDNINSRNTPNNSNDTYVN. Positions 375-391 are enriched in low complexity; it reads NDDNINSRNTPNNSNDT. Phosphoserine occurs at positions 405 and 426. Residues 449–912 enclose the Protein kinase domain; it reads HRLGKIIGFG…WKLKRIEEVL (464 aa). Residues 455–463 and Lys478 contribute to the ATP site; that span reads IGFGAWGII. Asp580 functions as the Proton acceptor in the catalytic mechanism. Disordered regions lie at residues 670 to 741 and 767 to 813; these read ENRK…KYIG and YDSP…SGSS. Positions 683-696 are enriched in polar residues; sequence VSSSSHSLKHLNQP. Residue Ser737 is modified to Phosphoserine. Tyr739 carries the phosphotyrosine modification. Residues 769 to 813 show a composition bias toward low complexity; sequence SPDSSQSEISAASSSSSNLSSLSSSTKASAVTNSGVTTSSPSGSS.

Belongs to the protein kinase superfamily. Ser/Thr protein kinase family. As to quaternary structure, interacts with URE2 and GDH2. Also interacts with the TORC1 kinase complex.

The protein localises to the cytoplasm. It carries out the reaction L-seryl-[protein] + ATP = O-phospho-L-seryl-[protein] + ADP + H(+). The catalysed reaction is L-threonyl-[protein] + ATP = O-phospho-L-threonyl-[protein] + ADP + H(+). Functionally, serine/threonine-protein kinase involved in the phosphorylation of the NAD(+)-dependent glutamate dehydrogenase GDH2. When overexpressed, confers hypersensitivity to rapamycin and induces rapid nuclear accumulation of GLN3 to activate the transcription of nitrogen-regulated genes. The protein is Nitrogen network kinase 1 (NNK1) of Saccharomyces cerevisiae (strain ATCC 204508 / S288c) (Baker's yeast).